A 688-amino-acid chain; its full sequence is Amino-acid acetyltransferase, mitochondrial (688 aa).

Residues 1–45 (MSSRALTWPRTAKSSLLKQQTSSFVGQPKLGTPNCRSFSSTADRP) constitute a mitochondrion transit peptide. Disordered regions lie at residues 1–59 (MSSR…SKSY) and 96–119 (LKAQHPPKAQTEPTTGHSKGTVTQ). Composition is skewed to polar residues over residues 12 to 25 (AKSSLLKQQTSSFV), 34 to 57 (NCRSFSSTADRPINQSAEFSSSSK), and 106 to 119 (TEPTTGHSKGTVTQ). The N-acetyltransferase domain maps to 509 to 678 (NRPRLSLDDP…YEQVCRSIQP (170 aa)).

This sequence belongs to the acetyltransferase family.

The protein localises to the mitochondrion. The enzyme catalyses L-glutamate + acetyl-CoA = N-acetyl-L-glutamate + CoA + H(+). It functions in the pathway amino-acid biosynthesis; L-arginine biosynthesis; N(2)-acetyl-L-ornithine from L-glutamate: step 1/4. In terms of biological role, N-acetylglutamate synthase involved in arginine biosynthesis. The chain is Amino-acid acetyltransferase, mitochondrial (arg2) from Aspergillus flavus (strain ATCC 200026 / FGSC A1120 / IAM 13836 / NRRL 3357 / JCM 12722 / SRRC 167).